The sequence spans 67 residues: Large ribosomal subunit protein bL31c (67 aa).

Belongs to the bacterial ribosomal protein bL31 family. Type A subfamily. In terms of assembly, part of the 50S ribosomal subunit.

Its subcellular location is the plastid. The protein localises to the chloroplast. In terms of biological role, binds the 23S rRNA. This is Large ribosomal subunit protein bL31c (rpl31) from Cyanidioschyzon merolae (strain NIES-3377 / 10D) (Unicellular red alga).